An 87-amino-acid polypeptide reads, in one-letter code: Large ribosomal subunit protein bL27 (87 aa).

Positions 1–21 are disordered; that stretch reads MAHKKAGGSSRNGRDSESKRL.

Belongs to the bacterial ribosomal protein bL27 family.

The chain is Large ribosomal subunit protein bL27 from Paraburkholderia xenovorans (strain LB400).